Consider the following 453-residue polypeptide: Acyl-coenzyme A thioesterase 2, mitochondrial (453 aa).

The N-terminal 42 residues, 1–42, are a transit peptide targeting the mitochondrion; that stretch reads MVASSFAVLRASRLCQQDWKSWARLFVPPPLSTGGRTTWART. Residue Lys-83 is modified to N6-acetyllysine. Catalysis depends on charge relay system residues Ser-273, Asp-365, and His-399. Lys-447 is subject to N6-succinyllysine.

This sequence belongs to the C/M/P thioester hydrolase family. As to quaternary structure, monomer. As to expression, highly expressed in brown and white adipose tissue, muscle, heart, kidney, lung, adrenal gland and spleen; weakly expressed in intestine, testis and brain.

The protein resides in the mitochondrion matrix. The enzyme catalyses hexadecanoyl-CoA + H2O = hexadecanoate + CoA + H(+). It catalyses the reaction tetradecanoyl-CoA + H2O = tetradecanoate + CoA + H(+). The catalysed reaction is octadecanoyl-CoA + H2O = octadecanoate + CoA + H(+). It carries out the reaction eicosanoyl-CoA + H2O = eicosanoate + CoA + H(+). The enzyme catalyses decanoyl-CoA + H2O = decanoate + CoA + H(+). It catalyses the reaction dodecanoyl-CoA + H2O = dodecanoate + CoA + H(+). The catalysed reaction is (9Z)-octadecenoyl-CoA + H2O = (9Z)-octadecenoate + CoA + H(+). It carries out the reaction (9Z)-hexadecenoyl-CoA + H2O = (9Z)-hexadecenoate + CoA + H(+). The enzyme catalyses (9E)-octadecenoyl-CoA + H2O = (9E)-octadecenoate + CoA + H(+). It catalyses the reaction (9Z,12Z)-octadecadienoyl-CoA + H2O = (9Z,12Z)-octadecadienoate + CoA + H(+). Its pathway is lipid metabolism; fatty acid metabolism. In terms of biological role, catalyzes the hydrolysis of acyl-CoAs into free fatty acids and coenzyme A (CoASH), regulating their respective intracellular levels. Displays higher activity toward long chain acyl CoAs (C14-C20). The enzyme is involved in enhancing the hepatic fatty acid oxidation in mitochondria. The chain is Acyl-coenzyme A thioesterase 2, mitochondrial (Acot2) from Mus musculus (Mouse).